Here is a 965-residue protein sequence, read N- to C-terminus: Phosphatidylethanolamine N-methyltransferase (965 aa).

The tract at residues methionine 1 to valine 55 is disordered. Topologically, residues methionine 1–aspartate 91 are lumenal. Polar residues predominate over residues proline 22 to serine 35. Positions glutamine 36–glutamine 45 are enriched in low complexity. Residues valine 92–valine 112 traverse the membrane as a helical segment. At lysine 113 to proline 115 the chain is on the cytoplasmic side. The helical transmembrane segment at leucine 116–leucine 136 threads the bilayer. Topologically, residues threonine 137–arginine 201 are lumenal. The chain crosses the membrane as a helical span at residues valine 202–alanine 222. The Cytoplasmic portion of the chain corresponds to histidine 223–glycine 229. The chain crosses the membrane as a helical span at residues leucine 230–valine 250. Residues lysine 251–aspartate 279 are Lumenal-facing. Residues glycine 280–isoleucine 300 traverse the membrane as a helical segment. Residues serine 301–serine 306 lie on the Cytoplasmic side of the membrane. A helical transmembrane segment spans residues tyrosine 307–valine 327. Residues glutamate 328–arginine 389 lie on the Lumenal side of the membrane. A helical transmembrane segment spans residues isoleucine 390–proline 410. Residues asparagine 411–alanine 417 lie on the Cytoplasmic side of the membrane. A helical membrane pass occupies residues leucine 418–leucine 438. The Lumenal segment spans residues threonine 439–glycine 467. Residues isoleucine 468–tyrosine 488 form a helical membrane-spanning segment. Residues glutamate 489–tyrosine 496 lie on the Cytoplasmic side of the membrane. A helical transmembrane segment spans residues glycine 497 to alanine 517. Residues threonine 518–arginine 573 are Lumenal-facing. Residues alanine 574–glutamate 594 form a helical membrane-spanning segment. Residues lysine 595 to glutamate 965 lie on the Cytoplasmic side of the membrane.

Belongs to the class VI-like SAM-binding methyltransferase superfamily. CHO2 family.

It is found in the endoplasmic reticulum membrane. It carries out the reaction a 1,2-diacyl-sn-glycero-3-phosphoethanolamine + S-adenosyl-L-methionine = a 1,2-diacyl-sn-glycero-3-phospho-N-methylethanolamine + S-adenosyl-L-homocysteine + H(+). It functions in the pathway phospholipid metabolism; phosphatidylcholine biosynthesis. In terms of biological role, catalyzes the first step of the methylation pathway of phosphatidylcholine biosynthesis, the SAM-dependent methylation of phosphatidylethanolamine (PE) to phosphatidylmonomethylethanolamine (PMME). This is Phosphatidylethanolamine N-methyltransferase from Neurospora crassa (strain ATCC 24698 / 74-OR23-1A / CBS 708.71 / DSM 1257 / FGSC 987).